The following is a 353-amino-acid chain: Histidinol-phosphate aminotransferase (353 aa).

At lysine 218 the chain carries N6-(pyridoxal phosphate)lysine.

This sequence belongs to the class-II pyridoxal-phosphate-dependent aminotransferase family. Histidinol-phosphate aminotransferase subfamily. Homodimer. Requires pyridoxal 5'-phosphate as cofactor.

The catalysed reaction is L-histidinol phosphate + 2-oxoglutarate = 3-(imidazol-4-yl)-2-oxopropyl phosphate + L-glutamate. It participates in amino-acid biosynthesis; L-histidine biosynthesis; L-histidine from 5-phospho-alpha-D-ribose 1-diphosphate: step 7/9. In Synechococcus sp. (strain JA-3-3Ab) (Cyanobacteria bacterium Yellowstone A-Prime), this protein is Histidinol-phosphate aminotransferase.